Reading from the N-terminus, the 326-residue chain is Tetraacyldisaccharide 4'-kinase (326 aa).

Residue 55-62 (TAGGNGKT) participates in ATP binding.

This sequence belongs to the LpxK family.

It carries out the reaction a lipid A disaccharide + ATP = a lipid IVA + ADP + H(+). It functions in the pathway glycolipid biosynthesis; lipid IV(A) biosynthesis; lipid IV(A) from (3R)-3-hydroxytetradecanoyl-[acyl-carrier-protein] and UDP-N-acetyl-alpha-D-glucosamine: step 6/6. In terms of biological role, transfers the gamma-phosphate of ATP to the 4'-position of a tetraacyldisaccharide 1-phosphate intermediate (termed DS-1-P) to form tetraacyldisaccharide 1,4'-bis-phosphate (lipid IVA). The polypeptide is Tetraacyldisaccharide 4'-kinase (Serratia proteamaculans (strain 568)).